The chain runs to 142 residues: Small ribosomal subunit protein uS12 (142 aa).

A disordered region spans residues 1 to 22 (MPTFNQLVRKGRKAAKKKSTAP). Positions 9-19 (RKGRKAAKKKS) are enriched in basic residues. Asp-102 bears the 3-methylthioaspartic acid mark.

Belongs to the universal ribosomal protein uS12 family. In terms of assembly, part of the 30S ribosomal subunit. Contacts proteins S8 and S17. May interact with IF1 in the 30S initiation complex.

Its function is as follows. With S4 and S5 plays an important role in translational accuracy. Functionally, interacts with and stabilizes bases of the 16S rRNA that are involved in tRNA selection in the A site and with the mRNA backbone. Located at the interface of the 30S and 50S subunits, it traverses the body of the 30S subunit contacting proteins on the other side and probably holding the rRNA structure together. The combined cluster of proteins S8, S12 and S17 appears to hold together the shoulder and platform of the 30S subunit. The sequence is that of Small ribosomal subunit protein uS12 from Acetivibrio thermocellus (strain ATCC 27405 / DSM 1237 / JCM 9322 / NBRC 103400 / NCIMB 10682 / NRRL B-4536 / VPI 7372) (Clostridium thermocellum).